The following is a 550-amino-acid chain: Methionine--tRNA ligase (550 aa).

The short motif at Pro-13–His-23 is the 'HIGH' region element. Zn(2+)-binding residues include Cys-145, Cys-148, Cys-158, and Cys-161. Residues Gln-331–Ser-335 carry the 'KMSKS' region motif. Lys-334 lines the ATP pocket.

It belongs to the class-I aminoacyl-tRNA synthetase family. MetG type 1 subfamily. As to quaternary structure, monomer. Requires Zn(2+) as cofactor.

It is found in the cytoplasm. It catalyses the reaction tRNA(Met) + L-methionine + ATP = L-methionyl-tRNA(Met) + AMP + diphosphate. Functionally, is required not only for elongation of protein synthesis but also for the initiation of all mRNA translation through initiator tRNA(fMet) aminoacylation. The sequence is that of Methionine--tRNA ligase from Chlamydia trachomatis serovar A (strain ATCC VR-571B / DSM 19440 / HAR-13).